Consider the following 90-residue polypeptide: MVKNSFISLIPQEEKEENRGSVEFQVFSFTNKIRRLTSHLELHRKDYLSQRGLRKILGKRQRLLAYLSKKNRVRYNKLIGQLDIREPKTR.

Belongs to the universal ribosomal protein uS15 family. In terms of assembly, part of the 30S ribosomal subunit.

Its subcellular location is the plastid. It is found in the chloroplast. The polypeptide is Small ribosomal subunit protein uS15c (rps15) (Acorus calamus (Sweet flag)).